The following is a 356-amino-acid chain: Iron-regulated protein A (356 aa).

The signal sequence occupies residues 1–44 (MIVTGSQVRQGLNTWFVLPLRRTAIGLGCAGVATLFSACGQTQA). 2 hydrophilic regions span residues 75-145 (QALQ…EQRE) and 240-310 (GGPL…ATAR).

As to quaternary structure, the iron-regulated protein A is one unit of the protein complex CPVI-4, which is synthesized under iron deficient conditions.

Its subcellular location is the cell inner membrane. Functionally, irpA occurs under iron-deficient growth conditions in cyanobacterium Synechococcus and disappears in cells recovering from iron starvation. It seems to be involved in iron acquisition, uptake or storage. The polypeptide is Iron-regulated protein A (irpA) (Synechococcus elongatus (strain ATCC 33912 / PCC 7942 / FACHB-805) (Anacystis nidulans R2)).